The sequence spans 361 residues: Probable galacturonosyltransferase-like 5 (361 aa).

Residues 1-6 lie on the Cytoplasmic side of the membrane; sequence MHWITR. The helical; Signal-anchor for type II membrane protein transmembrane segment at 7 to 27 threads the bilayer; that stretch reads FSAFFSAALAMILLSPSLQSF. Topologically, residues 28–361 are lumenal; the sequence is SPAAAIRSSH…APYDLYKHSH (334 aa). Asn218 and Asn234 each carry an N-linked (GlcNAc...) asparagine glycan.

It belongs to the glycosyltransferase 8 family.

The protein localises to the golgi apparatus membrane. It functions in the pathway glycan metabolism; pectin biosynthesis. May be involved in pectin and/or xylans biosynthesis in cell walls. The protein is Probable galacturonosyltransferase-like 5 (GATL5) of Arabidopsis thaliana (Mouse-ear cress).